The chain runs to 954 residues: MSMPKDFTFTDYKPYDFANRRHIGPSPAEMDEMLKVVGYPSLDALIDDTVPPSIRQQTPLAWGAPMTEREALDKLRETANRNRKVVSLIGQGYYGTITPPVIQRNILENPAWYTAYTPYQPEISQGRLEALLNFQTMVCDLTGLDVANASLLDEATAAAEAMAIAERVAKSKAKAFFVDENCHPQTIALLKTRAEPLGWQIVVGNPFEDLDAAIVFGAIFQYPGTYGHVRDFSGLIARLHELGAIAAVAADPLALALLKSPGEMGADIAVGSTQRFGVPVGYGGPHAAYMAVRDAYKRSMPGRLVGVSVDARGNRAYRLSLQTREQHIRREKATSNICTAQVLLAVMASMYAVFHGPEGIKAIAQSVHQKTVRLALGLEKLGYTVEPDVFFDTITVEVGKLQGIILKAAVAEDVNLRKIGTTKIGISLDERSRPITLEAVWRAFGGDFSVDQFEPDYRLPKELLRTSDYLTHPIFHMNRAESEMTRYMRRLADRDLALDRAMIPLGSCTMKLNATAEMLPITWPEFSEIHPFVPADQAMGYHHLIEDLSQKLCAITGYDAISMQPNSGAQGEYAGLLAIRAYHIANGNEHRDVCLIPTSAHGTNPASAQMAGMKVVVVKVSDAGEIAMDDFRAKAEQYAETLSCCMITYPSTHGVFEENVREVCEIVHKHGGQVYLDGANMNAMVGLSRPGDIGSDVSHLNLHKTFCIPHGGGGPGMGPIGVKAHLAPFLPGHPESGEHKGAVSAAPFGSASILPISWSYCLMMGGEGLTQATKVAILNANYVAARLKGAFDVLYKSAKGRVAHECIIDTRPLAESAGVTVDDVAKRLIDCGFHAPTMSWPVAGTLMIEPTESETKAELDRFCDALLAIREEARAIAEGRMDKINNPLKNAPHTVEDLVGDWDRPYSREQACFPPGAFRVDKYWSPVNRVDNVYGDRNLVCTCPPIESYAEAAE.

Lysine 704 carries the post-translational modification N6-(pyridoxal phosphate)lysine.

Belongs to the GcvP family. As to quaternary structure, the glycine cleavage system is composed of four proteins: P, T, L and H. It depends on pyridoxal 5'-phosphate as a cofactor.

It carries out the reaction N(6)-[(R)-lipoyl]-L-lysyl-[glycine-cleavage complex H protein] + glycine + H(+) = N(6)-[(R)-S(8)-aminomethyldihydrolipoyl]-L-lysyl-[glycine-cleavage complex H protein] + CO2. In terms of biological role, the glycine cleavage system catalyzes the degradation of glycine. The P protein binds the alpha-amino group of glycine through its pyridoxal phosphate cofactor; CO(2) is released and the remaining methylamine moiety is then transferred to the lipoamide cofactor of the H protein. This is Glycine dehydrogenase (decarboxylating) from Sinorhizobium medicae (strain WSM419) (Ensifer medicae).